The following is a 90-amino-acid chain: Small ribosomal subunit protein uS17 (90 aa).

It belongs to the universal ribosomal protein uS17 family. In terms of assembly, part of the 30S ribosomal subunit.

Its function is as follows. One of the primary rRNA binding proteins, it binds specifically to the 5'-end of 16S ribosomal RNA. In Paraburkholderia phymatum (strain DSM 17167 / CIP 108236 / LMG 21445 / STM815) (Burkholderia phymatum), this protein is Small ribosomal subunit protein uS17.